We begin with the raw amino-acid sequence, 174 residues long: Gamma-crystallin D (174 aa).

Beta/gamma crystallin 'Greek key' domains lie at 2 to 40 (GKITLYEDRGFQGRHYECSSDHPNLQPYLSRCNSARVDS) and 41 to 83 (GCWM…RLIP). Residues 84–87 (HSGS) are connecting peptide. Beta/gamma crystallin 'Greek key' domains lie at 88–128 (HRIR…NVLE) and 129–171 (GSWV…RRVI).

This sequence belongs to the beta/gamma-crystallin family. As to quaternary structure, monomer.

Its function is as follows. Crystallins are the dominant structural components of the vertebrate eye lens. The polypeptide is Gamma-crystallin D (CRYGD) (Homo sapiens (Human)).